A 325-amino-acid chain; its full sequence is MRRLGSVQQKIPCVFLTEVRDEPSRKRDCQQFQVVATENVSPAALASDVHCAAATEKVDGTCCYVTTFNGEPYLWARLDRKPTKQADKRFKKYQYSQKTCKGFVWNVNEDFREVPEFWMAAHRVQHENGHPVPDEHGHIPGWVPVDHTNKQYCWHSSVVNYGTGVALVLKTHGEDEGQLEIVSVPLADLMEQTLELIGTNVNGNPYGLGSKKHPVHVLVPHGVLRIRNPPAVEFQQICSWFQECQEGRVEGIVWHCDDGMLIKIHRHHLGLKWPVADTFLNTRPVVVHVDESDADPCASEKDLFKSFSSVNRQTFSSVRDIQFEP.

The cofactor is Mg(2+). Requires Mn(2+) as cofactor. In terms of processing, AMPylates itself (auto-AMPylation).

The catalysed reaction is ATP + (ribonucleotide)n-3'-hydroxyl + 5'-phospho-(ribonucleotide)m = (ribonucleotide)n+m + AMP + diphosphate.. Its function is as follows. Functions as an RNA ligase, in vitro. The ligation reaction entails three nucleotidyl transfer steps. In the first step, the RNA ligase reacts with ATP in the absence of nucleic acid to form a covalent ligase-AMP intermediate and release pyrophosphate. In step 2, the ligase-AMP binds to the nucleic acid and transfers the adenylate to the 5'-PO4 terminus to form an adenylylated intermediate. In step 3, the RNA ligase directs the attack of the 3'-OH on the 5'-phosphoanhydride linkage, resulting in a repaired 3'-5' phosphodiester and release of AMP. Exhibits selectivity for single-stranded RNA substrates and may not have nick-sealing activity on double-stranded DNA-RNA hybrids. May play a role in maintaining RNA integrity under stress conditions, for example in response to reactive oxygen species (ROS). The sequence is that of RNA ligase 1 from Danio rerio (Zebrafish).